The chain runs to 197 residues: ATP-dependent Clp protease proteolytic subunit (197 aa).

Residue serine 98 is the Nucleophile of the active site. Histidine 123 is a catalytic residue.

Belongs to the peptidase S14 family. In terms of assembly, fourteen ClpP subunits assemble into 2 heptameric rings which stack back to back to give a disk-like structure with a central cavity, resembling the structure of eukaryotic proteasomes.

Its subcellular location is the cytoplasm. The enzyme catalyses Hydrolysis of proteins to small peptides in the presence of ATP and magnesium. alpha-casein is the usual test substrate. In the absence of ATP, only oligopeptides shorter than five residues are hydrolyzed (such as succinyl-Leu-Tyr-|-NHMec, and Leu-Tyr-Leu-|-Tyr-Trp, in which cleavage of the -Tyr-|-Leu- and -Tyr-|-Trp bonds also occurs).. Its function is as follows. Cleaves peptides in various proteins in a process that requires ATP hydrolysis. Has a chymotrypsin-like activity. Plays a major role in the degradation of misfolded proteins. This chain is ATP-dependent Clp protease proteolytic subunit, found in Haemophilus ducreyi (strain 35000HP / ATCC 700724).